A 444-amino-acid chain; its full sequence is Ribosomal protein uS12 methylthiotransferase RimO (444 aa).

An MTTase N-terminal domain is found at 2-118; sequence LKIALESLGC…IDKILKELSE (117 aa). [4Fe-4S] cluster is bound by residues Cys11, Cys47, Cys81, Cys155, Cys159, and Cys162. Residues 141-371 form the Radical SAM core domain; sequence STPSYMAYLK…MMIQQKISEE (231 aa). The 68-residue stretch at 374–441 folds into the TRAM domain; it reads DKKIGKTYEV…EYDLMGDVLY (68 aa).

Belongs to the methylthiotransferase family. RimO subfamily. Requires [4Fe-4S] cluster as cofactor.

Its subcellular location is the cytoplasm. It catalyses the reaction L-aspartate(89)-[ribosomal protein uS12]-hydrogen + (sulfur carrier)-SH + AH2 + 2 S-adenosyl-L-methionine = 3-methylsulfanyl-L-aspartate(89)-[ribosomal protein uS12]-hydrogen + (sulfur carrier)-H + 5'-deoxyadenosine + L-methionine + A + S-adenosyl-L-homocysteine + 2 H(+). Catalyzes the methylthiolation of an aspartic acid residue of ribosomal protein uS12. This is Ribosomal protein uS12 methylthiotransferase RimO from Clostridioides difficile (strain 630) (Peptoclostridium difficile).